A 474-amino-acid polypeptide reads, in one-letter code: Trichothecene 3-O-acetyltransferase (474 aa).

Belongs to the trichothecene 3-O-acetyltransferase family.

Trichothecene 3-O-acetyltransferase involved in self-protection against trichothecenes, mycotoxins acting as eukaryotic protein synthesis inhibitors. Its existence is surprising in a non-trichothecene producer organism which needs no self-protection again endogenic trichothecenes. The persistence of this non-essential gene may be due to a selective advantage that it may confer, like a resistance to exogenic trichothecenes. The polypeptide is Trichothecene 3-O-acetyltransferase (AYT1) (Saccharomyces cerevisiae (strain ATCC 204508 / S288c) (Baker's yeast)).